A 514-amino-acid polypeptide reads, in one-letter code: Maturase K (514 aa).

It belongs to the intron maturase 2 family. MatK subfamily.

It is found in the plastid. The protein localises to the chloroplast. Usually encoded in the trnK tRNA gene intron. Probably assists in splicing its own and other chloroplast group II introns. The chain is Maturase K from Plantago argentea (Silver plantain).